We begin with the raw amino-acid sequence, 239 residues long: Ribosomal RNA small subunit methyltransferase G (239 aa).

Residues Gly-76, Phe-81, 99-101 (DSS), 128-129 (IE), and Arg-147 each bind S-adenosyl-L-methionine.

The protein belongs to the methyltransferase superfamily. RNA methyltransferase RsmG family.

The protein localises to the cytoplasm. Its function is as follows. Specifically methylates the N7 position of a guanine in 16S rRNA. The chain is Ribosomal RNA small subunit methyltransferase G from Prochlorococcus marinus subsp. pastoris (strain CCMP1986 / NIES-2087 / MED4).